Here is a 328-residue protein sequence, read N- to C-terminus: Probable cell division protein WhiA (328 aa).

A DNA-binding region (H-T-H motif) is located at residues 276 to 309 (SLEELGRLADPQMTKDAVAGRIRRLLHMADKKAS).

Belongs to the WhiA family.

In terms of biological role, involved in cell division and chromosome segregation. The polypeptide is Probable cell division protein WhiA (Corynebacterium diphtheriae (strain ATCC 700971 / NCTC 13129 / Biotype gravis)).